The following is a 60-amino-acid chain: Large ribosomal subunit protein uL30 (60 aa).

Belongs to the universal ribosomal protein uL30 family. In terms of assembly, part of the 50S ribosomal subunit.

This Syntrophobacter fumaroxidans (strain DSM 10017 / MPOB) protein is Large ribosomal subunit protein uL30.